Consider the following 174-residue polypeptide: Glutaredoxin-C5, chloroplastic (174 aa).

Residues 1-51 constitute a chloroplast transit peptide; the sequence is MAVTAFNTLKLVSSSLDPIPSVSCSSYSFSLIYVGSPYKRCLKQSCSVRAM. Thr-52 is subject to N-acetylthreonine. S-glutathionyl cysteine; partial is present on Cys-90. Cys-90 and Cys-93 are oxidised to a cystine. In terms of domain architecture, Glutaredoxin spans 93–171; sequence CTEVKTLFKR…LMLAEANGKN (79 aa). Val-135, Cys-148, and Thr-149 together coordinate glutathione. An S-glutathionyl cysteine; partial modification is found at Cys-148.

Belongs to the glutaredoxin family. CPYC subfamily. In terms of assembly, monomeric apoprotein and homodimeric holoprotein containing a [2Fe-2S] cluster. No in vitro interactions with SUFE1, BOLA1, BOLA2 or BOLA4. Glutathionylated.

The protein resides in the plastid. The protein localises to the chloroplast. In terms of biological role, has a glutathione-disulfide oxidoreductase activity in the presence of NADPH and glutathione reductase. Reduces low molecular weight disulfides and proteins. Can assemble a [2Fe-2S] cluster, but cannot transfer it to an apoferredoxin. In Arabidopsis thaliana (Mouse-ear cress), this protein is Glutaredoxin-C5, chloroplastic.